A 294-amino-acid chain; its full sequence is tRNA-uridine aminocarboxypropyltransferase 1 (294 aa).

A disordered region spans residues 158-185 (DMQNDSSCEPSLKRPKCSQQYDKSKNEG). The short motif at 202-205 (DSTW) is the DXTW element.

The protein belongs to the TDD superfamily. DTWD1 family.

The protein resides in the nucleus. The catalysed reaction is a uridine in tRNA + S-adenosyl-L-methionine = a 3-[(3S)-3-amino-3-carboxypropyl]uridine in tRNA + S-methyl-5'-thioadenosine + H(+). Catalyzes the formation of 3-(3-amino-3-carboxypropyl)uridine (acp3U) at position 20 in the D-loop of several cytoplasmic tRNAs (acp3U(20)). The polypeptide is tRNA-uridine aminocarboxypropyltransferase 1 (Xenopus tropicalis (Western clawed frog)).